The following is a 353-amino-acid chain: Replication-associated protein (353 aa).

The 109-residue stretch at 8–116 folds into the CRESS-DNA virus Rep endonuclease domain; the sequence is RVQSKNYFLT…DGVTIEWGQF (109 aa). The RCR-1 signature appears at 15 to 18; it reads FLTY. A divalent metal cation contacts are provided by glutamate 49, histidine 57, and histidine 59. An RCR-2 motif is present at residues 57 to 59; the sequence is HLH. Tyrosine 103 (for DNA cleavage activity) is an active-site residue. Positions 103 to 106 match the RCR-3 motif; sequence YIDK. Position 107 (aspartate 107) interacts with a divalent metal cation. A binding to RBR1 region spans residues 143–153; sequence IESALTILKEE. The interval 156–176 is oligomerization; it reads KDYVLQNHNIRSNLERIFFKV. 222 to 229 is a binding site for ATP; the sequence is GDSRTGKT.

It belongs to the geminiviridae Rep protein family. As to quaternary structure, homooligomer. Interacts with the replication enhancer protein (REn). Interacts with host retinoblastoma-related protein 1 (RBR1), and may thereby induce the transcription of host replicative enzymes even if the cell is not dividing anymore. Interacts with host PCNA. Interacts with host SCE1 protein. Mg(2+) is required as a cofactor. The cofactor is Mn(2+).

The protein localises to the host nucleus. Essential for the replication of viral ssDNA. The closed circular ssDNA genome is first converted to a superhelical dsDNA. Rep binds a specific region at the genome origin of replication. It introduces an endonucleolytic nick within the conserved sequence 5'-TAATATTAC-3' in the intergenic region of the genome present in all geminiviruses, thereby initiating the rolling circle replication (RCR). Following cleavage, binds covalently to the 5'-phosphate of DNA as a tyrosyl ester. The cleavage gives rise to a free 3'-OH that serves as a primer for the cellular DNA polymerase. The polymerase synthesizes the (+) strand DNA by rolling circle mechanism. After one round of replication, a Rep-catalyzed nucleotidyl transfer reaction releases a circular single-stranded virus genome, thereby terminating the replication. Displays origin-specific DNA cleavage, nucleotidyl transferase, ATPase and helicase activities. The polypeptide is Replication-associated protein (Macroptilium lathyroides (Lima bean)).